Consider the following 524-residue polypeptide: Peptide chain release factor 3 (524 aa).

In terms of domain architecture, tr-type G spans 9–275 (QRRRTFAIIS…AVVELSPPPL (267 aa)). GTP is bound by residues 18-25 (SHPDAGKT), 86-90 (DTPGH), and 140-143 (NKLD).

This sequence belongs to the TRAFAC class translation factor GTPase superfamily. Classic translation factor GTPase family. PrfC subfamily.

The protein resides in the cytoplasm. In terms of biological role, increases the formation of ribosomal termination complexes and stimulates activities of RF-1 and RF-2. It binds guanine nucleotides and has strong preference for UGA stop codons. It may interact directly with the ribosome. The stimulation of RF-1 and RF-2 is significantly reduced by GTP and GDP, but not by GMP. The sequence is that of Peptide chain release factor 3 from Methylobacillus flagellatus (strain ATCC 51484 / DSM 6875 / VKM B-1610 / KT).